The sequence spans 196 residues: dTDP-4-dehydro-6-deoxyglucose 3-epimerase (196 aa).

Substrate is bound by residues Arg21, Glu26, 45-47 (QVN), and Arg57. Catalysis depends on His60, which acts as the Proton acceptor. Residues Lys70 and Arg117 each coordinate substrate. Tyr130 (proton donor) is an active-site residue. Substrate contacts are provided by Glu141 and Arg166.

This sequence belongs to the dTDP-4-dehydrorhamnose 3,5-epimerase family. As to quaternary structure, homodimer.

It carries out the reaction dTDP-4-dehydro-6-deoxy-alpha-D-glucose = dTDP-4-dehydro-6-deoxy-alpha-D-allose. It functions in the pathway antibiotic biosynthesis. Its function is as follows. Involved in the biosynthesis of dTDP-6-deoxy-D-allose, an intermediate in the biosynthesis of mycinose, which is one of the two unusual sugars attached to the 16-membered macrolactone ring of the aglycone antibiotic chalcomycin. Catalyzes the conversion of dTDP-4-oxo-6-deoxyglucose to dTDP-4-oxo-6-deoxyallose, via a C-3 epimerization. This is dTDP-4-dehydro-6-deoxyglucose 3-epimerase from Streptomyces bikiniensis.